Here is a 685-residue protein sequence, read N- to C-terminus: A-type ATP synthase subunit I (685 aa).

The next 7 membrane-spanning stretches (helical) occupy residues Val172–Pro192, Glu348–Pro368, Val394–Gly414, Leu464–Ile484, Leu538–Tyr558, Met604–Val624, and Ala626–Ala646.

The protein belongs to the V-ATPase 116 kDa subunit family. In terms of assembly, has multiple subunits with at least A(3), B(3), C, D, E, F, H, I and proteolipid K(x).

It is found in the cell membrane. In terms of biological role, component of the A-type ATP synthase that produces ATP from ADP in the presence of a proton gradient across the membrane. The chain is A-type ATP synthase subunit I from Aeropyrum pernix (strain ATCC 700893 / DSM 11879 / JCM 9820 / NBRC 100138 / K1).